We begin with the raw amino-acid sequence, 258 residues long: Phosphate import ATP-binding protein PstB (258 aa).

An ABC transporter domain is found at 12 to 253; it reads LEVKNLNFYY…PARKETEDYI (242 aa). An ATP-binding site is contributed by 44-51; it reads GPSGCGKS.

It belongs to the ABC transporter superfamily. Phosphate importer (TC 3.A.1.7) family. In terms of assembly, the complex is composed of two ATP-binding proteins (PstB), two transmembrane proteins (PstC and PstA) and a solute-binding protein (PstS).

It localises to the cell inner membrane. The enzyme catalyses phosphate(out) + ATP + H2O = ADP + 2 phosphate(in) + H(+). In terms of biological role, part of the ABC transporter complex PstSACB involved in phosphate import. Responsible for energy coupling to the transport system. The chain is Phosphate import ATP-binding protein PstB from Bordetella pertussis (strain Tohama I / ATCC BAA-589 / NCTC 13251).